A 242-amino-acid chain; its full sequence is uncharacterized protein (242 aa).

An NADP(+)-binding site is contributed by 8 to 15 (TGASGGIG). A substrate-binding site is contributed by serine 137. The Proton acceptor role is filled by tyrosine 150.

It belongs to the short-chain dehydrogenases/reductases (SDR) family.

This is an uncharacterized protein from Bacillus subtilis (strain 168).